The primary structure comprises 1270 residues: DNA-directed RNA polymerase subunit beta (1270 aa).

Belongs to the RNA polymerase beta chain family. In terms of assembly, the RNAP catalytic core consists of 2 alpha, 1 beta, 1 beta' and 1 omega subunit. When a sigma factor is associated with the core the holoenzyme is formed, which can initiate transcription.

It catalyses the reaction RNA(n) + a ribonucleoside 5'-triphosphate = RNA(n+1) + diphosphate. Its function is as follows. DNA-dependent RNA polymerase catalyzes the transcription of DNA into RNA using the four ribonucleoside triphosphates as substrates. The polypeptide is DNA-directed RNA polymerase subunit beta (Phocaeicola vulgatus (strain ATCC 8482 / DSM 1447 / JCM 5826 / CCUG 4940 / NBRC 14291 / NCTC 11154) (Bacteroides vulgatus)).